The chain runs to 392 residues: Elongation factor Tu 2 (392 aa).

A tr-type G domain is found at Lys10 to Glu201. Positions Gly19 to Thr26 are G1. Gly19–Thr26 lines the GTP pocket. Thr26 contributes to the Mg(2+) binding site. Residues Gly55–Ser59 are G2. A G3 region spans residues Asp76 to Gly79. Residues Asp76–His80 and Asn131–Asp134 each bind GTP. The interval Asn131–Asp134 is G4. The tract at residues Ser169–Leu171 is G5.

This sequence belongs to the TRAFAC class translation factor GTPase superfamily. Classic translation factor GTPase family. EF-Tu/EF-1A subfamily. As to quaternary structure, monomer.

It is found in the cytoplasm. It catalyses the reaction GTP + H2O = GDP + phosphate + H(+). Its function is as follows. GTP hydrolase that promotes the GTP-dependent binding of aminoacyl-tRNA to the A-site of ribosomes during protein biosynthesis. The polypeptide is Elongation factor Tu 2 (Rhizobium etli (strain ATCC 51251 / DSM 11541 / JCM 21823 / NBRC 15573 / CFN 42)).